Consider the following 107-residue polypeptide: Thioredoxin (107 aa).

Residues 2-107 (AGVLKNVTDD…ALLRPGPVPR (106 aa)) enclose the Thioredoxin domain. Cys33 and Cys36 are disulfide-bonded.

It belongs to the thioredoxin family.

Functionally, component of the thioredoxin-thioredoxin reductase system. Participates in various redox reactions through the reversible oxidation of its active center dithiol to a disulfide and catalyzes dithiol-disulfide exchange reactions. In Streptomyces clavuligerus, this protein is Thioredoxin (trxA).